We begin with the raw amino-acid sequence, 308 residues long: Probable dimethyladenosine transferase (308 aa).

Residues M1–K11 are compositionally biased toward basic residues. A disordered region spans residues M1–F24. A compositionally biased stretch (polar residues) spans A12–F24. Residues H31, L33, G58, E79, D107, and N122 each coordinate S-adenosyl-L-methionine.

It belongs to the class I-like SAM-binding methyltransferase superfamily. rRNA adenine N(6)-methyltransferase family. Part of the small subunit (SSU) processome, composed of more than 70 proteins and the RNA chaperone small nucleolar RNA (snoRNA) U3.

It is found in the nucleus. It localises to the nucleolus. It carries out the reaction adenosine(1779)/adenosine(1780) in 18S rRNA + 4 S-adenosyl-L-methionine = N(6)-dimethyladenosine(1779)/N(6)-dimethyladenosine(1780) in 18S rRNA + 4 S-adenosyl-L-homocysteine + 4 H(+). Specifically dimethylates two adjacent adenosines in the loop of a conserved hairpin near the 3'-end of 18S rRNA in the 40S particle. Involved in the pre-rRNA processing steps leading to small-subunit rRNA production independently of its RNA-modifying catalytic activity. Part of the small subunit (SSU) processome, first precursor of the small eukaryotic ribosomal subunit. During the assembly of the SSU processome in the nucleolus, many ribosome biogenesis factors, an RNA chaperone and ribosomal proteins associate with the nascent pre-rRNA and work in concert to generate RNA folding, modifications, rearrangements and cleavage as well as targeted degradation of pre-ribosomal RNA by the RNA exosome. This chain is Probable dimethyladenosine transferase, found in Caenorhabditis elegans.